The sequence spans 403 residues: Phosphoserine phosphatase RsbP (403 aa).

Residues 1-42 enclose the PAS domain; the sequence is MDKQLNDAPCGFLALSEEGSIIAANRTLIKILDYEPEQVIGQ. A PPM-type phosphatase domain is found at 191-402; that stretch reads QVQIDSYYNA…DDECFILVDV (212 aa).

The cofactor is Mn(2+).

The catalysed reaction is O-phospho-L-serine + H2O = L-serine + phosphate. It carries out the reaction O-phospho-D-serine + H2O = D-serine + phosphate. Its function is as follows. Positive regulator of sigma-B activity. Dephosphorylates RsbV in response to energy stress. This chain is Phosphoserine phosphatase RsbP (rsbP), found in Bacillus subtilis (strain 168).